Consider the following 714-residue polypeptide: Hormonally up-regulated neu tumor-associated kinase (714 aa).

The segment covering 1-15 has biased composition (low complexity); the sequence is MPAAAGDGLLGEPAA. Residues 1 to 26 are disordered; the sequence is MPAAAGDGLLGEPAAPGGGGGAEDAA. Residues 62–320 form the Protein kinase domain; the sequence is LIGSRKLGEG…IQQALANRWL (259 aa). ATP is bound by residues 68–76 and Lys91; that span reads LGEGSFAKV. Asp186 functions as the Proton acceptor in the catalytic mechanism. Residues 437–461 show a composition bias toward basic and acidic residues; it reads KKPKEQEKRGDFLHRPFSKKLDKNL. Disordered regions lie at residues 437–471, 518–552, and 590–615; these read KKPK…SGSL, MEFI…HKED, and ARRN…HTPL. The segment covering 599-611 has biased composition (low complexity); that stretch reads LSPGLPSGSMSPL.

It belongs to the protein kinase superfamily. CAMK Ser/Thr protein kinase family. SNF1 subfamily.

It catalyses the reaction L-seryl-[protein] + ATP = O-phospho-L-seryl-[protein] + ADP + H(+). It carries out the reaction L-threonyl-[protein] + ATP = O-phospho-L-threonyl-[protein] + ADP + H(+). The chain is Hormonally up-regulated neu tumor-associated kinase (HUNK) from Homo sapiens (Human).